A 449-amino-acid chain; its full sequence is Immunoglobulin gamma-1 heavy chain (449 aa).

A Pyrrolidone carboxylic acid modification is found at glutamine 1. Ig-like domains lie at 1–96 (QVQL…VYYC), 125–218 (PSVF…KKVE), 240–339 (PSVF…KTIS), and 348–444 (PQVY…KSLS). The tract at residues 1–119 (QVQLVQSGGG…GQGTLVTVSS (119 aa)) is variable (V) domain, involved in antigen recognition. Intrachain disulfides connect cysteine 22/cysteine 96, cysteine 146/cysteine 202, cysteine 263/cysteine 323, and cysteine 369/cysteine 427. The N-linked (GlcNAc...) asparagine glycan is linked to asparagine 73. The tract at residues 120-449 (ASTKGPSVFP…QKSLSLSPGK (330 aa)) is constant (C) domain. N-linked (GlcNAc...) (complex) asparagine glycosylation occurs at asparagine 299.

In terms of assembly, immunoglobulins are composed of two identical heavy chains and two identical light chains; disulfide-linked.

The protein localises to the secreted. Its subcellular location is the cell membrane. In terms of biological role, immunoglobulins, also known as antibodies, are membrane-bound or secreted glycoproteins produced by B lymphocytes. In the recognition phase of humoral immunity, the membrane-bound immunoglobulins serve as receptors which, upon binding of a specific antigen, trigger the clonal expansion and differentiation of B lymphocytes into immunoglobulins-secreting plasma cells. Secreted immunoglobulins mediate the effector phase of humoral immunity, which results in the elimination of bound antigens. The antigen binding site is formed by the variable domain of one heavy chain, together with that of its associated light chain. Thus, each immunoglobulin has two antigen binding sites with remarkable affinity for a particular antigen. The variable domains are assembled by a process called V-(D)-J rearrangement and can then be subjected to somatic hypermutations which, after exposure to antigen and selection, allow affinity maturation for a particular antigen. The sequence is that of Immunoglobulin gamma-1 heavy chain from Homo sapiens (Human).